The following is a 928-amino-acid chain: MFTSQRQLRQNGSPMSSSRSSQHSSGTASPISDSPASNRSYGRDLRGLMGIDIPANEPAFNRANSSDTIYFRPKKIYKMEHEHPSRSTLVQLQTRSQPDDVASSQVNPEGGTDDLELGDPCGNQSLYTIGAEYVPDLDFTKLVNEWQKSTEDLYEFRSSATPQVQIKDSGKGNYELWSSPDAILTQNKLRRDSFSQENSDSLSPEDSILSRNLHSKVKPIPLPRNSQQIFTPLSNLEAERRSSYTTSSNNNSITQNNKFSFAKLKYSLPTQSSAVPASFDSNASSLNFLPTTTLSTLSELQISPNDMMDLIQKLPRNFLNLPYTQRKKVIIEHAPSHDYKAMMSLVKKFMLTSSRSNFSLAGFANNASVSQATANDDNINSRNTPNNSNDTYVNTRPLQRSRHGSIASQFLSSFSPSMTSIAKMNSNPLSGSAGGSARPDDKGMEILGHRLGKIIGFGAWGIIRECFDIETGVGRVIKIVKFKGHQNIKKHVLREVAIWRTLKHNRILPLLDWKLDDNYAMYCLTERINDGTLYDLVISWDEFKRSKIPFAERCRLTIFLSLQLLSALKYMHSKTIVHGDIKLENCLLQKEGKKSDWKVFLCDFGMSCHFDEKHVYRNDTFDENLSSGNSHRKRKSIEQTNLIKYPTTNFLPDDRTNDFDASENLKYQFENRKHQPFTPKGMVSSSSHSLKHLNQPSSSSSSNLFHKPASQPQPQHRSPFHGRHKTTDFSNLEPEPSKYIGSLPYASPELLRYSDARRSKSVEMHIYDSPDSSQSEISAASSSSSNLSSLSSSTKASAVTNSGVTTSSPSGSSTDFPCIVSPLGPASDIWALGVMLYTMLVGKLPFNHEFEPRLRSLIKVGEFDRFSLAQVCKFDRKKNEGTIGQGLYDTVIGCLTIDLDKRWKLKRIEEVLQNEMNLSEAIHDNNGS.

The span at 1–12 (MFTSQRQLRQNG) shows a compositional bias: polar residues. Disordered regions lie at residues 1–43 (MFTS…SYGR) and 81–118 (HEHPSRSTLVQLQTRSQPDDVASSQVNPEGGTDDLELG). Low complexity predominate over residues 13 to 29 (SPMSSSRSSQHSSGTAS). 2 stretches are compositionally biased toward polar residues: residues 30–40 (PISDSPASNRS) and 86–107 (RSTLVQLQTRSQPDDVASSQVN). Residues S178 and S179 each carry the phosphoserine modification. The segment at 374–394 (ANDDNINSRNTPNNSNDTYVN) is disordered. The segment covering 375 to 391 (NDDNINSRNTPNNSNDT) has biased composition (low complexity). Phosphoserine occurs at positions 405 and 426. In terms of domain architecture, Protein kinase spans 449 to 912 (HRLGKIIGFG…WKLKRIEEVL (464 aa)). Residues 455–463 (IGFGAWGII) and K478 contribute to the ATP site. Residue D580 is the Proton acceptor of the active site. Disordered regions lie at residues 670–741 (ENRK…KYIG) and 767–813 (YDSP…SGSS). A compositionally biased stretch (polar residues) spans 683 to 696 (VSSSSHSLKHLNQP). The residue at position 737 (S737) is a Phosphoserine. Y739 carries the post-translational modification Phosphotyrosine. Positions 769–813 (SPDSSQSEISAASSSSSNLSSLSSSTKASAVTNSGVTTSSPSGSS) are enriched in low complexity.

Belongs to the protein kinase superfamily. Ser/Thr protein kinase family. As to quaternary structure, interacts with URE2 and GDH2. Also interacts with the TORC1 kinase complex.

It localises to the cytoplasm. The enzyme catalyses L-seryl-[protein] + ATP = O-phospho-L-seryl-[protein] + ADP + H(+). It carries out the reaction L-threonyl-[protein] + ATP = O-phospho-L-threonyl-[protein] + ADP + H(+). Its function is as follows. Serine/threonine-protein kinase involved in the phosphorylation of the NAD(+)-dependent glutamate dehydrogenase GDH2. When overexpressed, confers hypersensitivity to rapamycin and induces rapid nuclear accumulation of GLN3 to activate the transcription of nitrogen-regulated genes. The sequence is that of Nitrogen network kinase 1 (NNK1) from Saccharomyces cerevisiae (strain ATCC 204508 / S288c) (Baker's yeast).